Consider the following 650-residue polypeptide: p-hydroxybenzoic acid efflux pump subunit AaeB (650 aa).

A run of 11 helical transmembrane segments spans residues 7 to 27 (FPIK…HLNL), 32 to 52 (WAVM…GGDP), 61 to 81 (GILR…IMIA), 87 to 107 (VVML…SSLI), 115 to 135 (LGLA…SGGL), 148 to 168 (EIIL…PRSI), 365 to 385 (LFWL…LGVI), 402 to 422 (FVYG…YILP), 426 to 446 (QSAV…GILI), 450 to 470 (QIGT…DNPM), and 478 to 498 (IDNA…ILLI).

It belongs to the aromatic acid exporter ArAE (TC 2.A.85) family.

The protein resides in the cell inner membrane. Functionally, forms an efflux pump with AaeA. Could function as a metabolic relief valve, allowing to eliminate certain compounds when they accumulate to high levels in the cell. This is p-hydroxybenzoic acid efflux pump subunit AaeB from Pantoea ananatis (strain LMG 20103).